The sequence spans 251 residues: tRNA pseudouridine synthase A (251 aa).

Asp-52 serves as the catalytic Nucleophile. Tyr-113 serves as a coordination point for substrate.

Belongs to the tRNA pseudouridine synthase TruA family. Homodimer.

It carries out the reaction uridine(38/39/40) in tRNA = pseudouridine(38/39/40) in tRNA. Formation of pseudouridine at positions 38, 39 and 40 in the anticodon stem and loop of transfer RNAs. In Brucella abortus (strain 2308), this protein is tRNA pseudouridine synthase A.